The chain runs to 151 residues: Transcription antitermination protein NusB (151 aa).

It belongs to the NusB family.

Functionally, involved in transcription antitermination. Required for transcription of ribosomal RNA (rRNA) genes. Binds specifically to the boxA antiterminator sequence of the ribosomal RNA (rrn) operons. In Thermodesulfovibrio yellowstonii (strain ATCC 51303 / DSM 11347 / YP87), this protein is Transcription antitermination protein NusB.